The chain runs to 75 residues: Sec-independent protein translocase protein TatA (75 aa).

The chain crosses the membrane as a helical span at residues 1–21 (MGGISIWQLLIIVAIIVLLFG). Residues 50 to 75 (DAEFKSLNKDESATAGSEKVKDKEQA) are disordered.

It belongs to the TatA/E family. The Tat system comprises two distinct complexes: a TatABC complex, containing multiple copies of TatA, TatB and TatC subunits, and a separate TatA complex, containing only TatA subunits. Substrates initially bind to the TatABC complex, which probably triggers association of the separate TatA complex to form the active translocon.

It is found in the cell inner membrane. Part of the twin-arginine translocation (Tat) system that transports large folded proteins containing a characteristic twin-arginine motif in their signal peptide across membranes. TatA could form the protein-conducting channel of the Tat system. In Mannheimia succiniciproducens (strain KCTC 0769BP / MBEL55E), this protein is Sec-independent protein translocase protein TatA.